Reading from the N-terminus, the 234-residue chain is Orotidine 5'-phosphate decarboxylase (234 aa).

Residues Asp10, Lys31, 58–67 (DLKLHDIPNT), Thr121, Arg183, Gln192, Gly212, and Arg213 each bind substrate. The active-site Proton donor is Lys60.

The protein belongs to the OMP decarboxylase family. Type 1 subfamily. Homodimer.

It catalyses the reaction orotidine 5'-phosphate + H(+) = UMP + CO2. Its pathway is pyrimidine metabolism; UMP biosynthesis via de novo pathway; UMP from orotate: step 2/2. Its function is as follows. Catalyzes the decarboxylation of orotidine 5'-monophosphate (OMP) to uridine 5'-monophosphate (UMP). This is Orotidine 5'-phosphate decarboxylase from Lysinibacillus sphaericus (strain C3-41).